An 848-amino-acid polypeptide reads, in one-letter code: Envelope glycoprotein H (848 aa).

A signal peptide spans 1 to 24 (MLQPYRKMLIFAVVTVAFAMAVWS). At 25–808 (TPVPATPSGV…ASYSSFKVPS (784 aa)) the chain is on the virion surface side. Residues N36, N41, N45, N60, N119, N182, and N210 are each glycosylated (N-linked (GlcNAc...) asparagine; by host). Residues 166–191 (NPVGVVLSPPRGSPSANTTIRDDGGP) are disordered. The tract at residues 240 to 303 (DTTQVVAYLG…HAGPIYKVYV (64 aa)) is interaction with gL. N-linked (GlcNAc...) asparagine; by host glycans are attached at residues N496, N672, N766, and N789. A helical transmembrane segment spans residues 809 to 829 (TYLWASIGGLLLAILILYIII). Topologically, residues 830–848 (KMLCGGVTNDGYKLLLSYE) are intravirion.

The protein belongs to the herpesviridae glycoprotein H family. In terms of assembly, interacts with glycoprotein L (gL); this interaction is necessary for the correct processing and cell surface expression of gH. The heterodimer gH/gL seems to interact with gB trimers during fusion. N-glycosylated, O-glycosylated, and sialylated.

The protein localises to the virion membrane. Its subcellular location is the host cell membrane. It is found in the host endosome membrane. Functionally, the heterodimer glycoprotein H-glycoprotein L is required for the fusion of viral and plasma membranes leading to virus entry into the host cell. Following initial binding to host receptor, membrane fusion is mediated by the fusion machinery composed of gB and the heterodimer gH/gL. May also be involved in the fusion between the virion envelope and the outer nuclear membrane during virion morphogenesis. This Equus caballus (Horse) protein is Envelope glycoprotein H.